The chain runs to 269 residues: Putative pyruvate, phosphate dikinase regulatory protein (269 aa).

147-154 contributes to the ADP binding site; it reads GLSRTSKT.

The protein belongs to the pyruvate, phosphate/water dikinase regulatory protein family. PDRP subfamily.

It catalyses the reaction N(tele)-phospho-L-histidyl/L-threonyl-[pyruvate, phosphate dikinase] + ADP = N(tele)-phospho-L-histidyl/O-phospho-L-threonyl-[pyruvate, phosphate dikinase] + AMP + H(+). The enzyme catalyses N(tele)-phospho-L-histidyl/O-phospho-L-threonyl-[pyruvate, phosphate dikinase] + phosphate + H(+) = N(tele)-phospho-L-histidyl/L-threonyl-[pyruvate, phosphate dikinase] + diphosphate. Its function is as follows. Bifunctional serine/threonine kinase and phosphorylase involved in the regulation of the pyruvate, phosphate dikinase (PPDK) by catalyzing its phosphorylation/dephosphorylation. This is Putative pyruvate, phosphate dikinase regulatory protein from Clostridium botulinum (strain 657 / Type Ba4).